We begin with the raw amino-acid sequence, 931 residues long: Aconitate hydratase A (931 aa).

The disordered stretch occupies residues 402–454 (SASPVDEASAESFPASDAPAYGSQENGAGAPQHADGTGAAVPSNPVTVTAPDG). Cys472, Cys538, and Cys541 together coordinate [4Fe-4S] cluster.

It belongs to the aconitase/IPM isomerase family. [4Fe-4S] cluster is required as a cofactor.

It carries out the reaction citrate = D-threo-isocitrate. The enzyme catalyses citrate = cis-aconitate + H2O. The catalysed reaction is cis-aconitate + H2O = D-threo-isocitrate. It functions in the pathway carbohydrate metabolism; tricarboxylic acid cycle; isocitrate from oxaloacetate: step 2/2. Catalyzes the reversible isomerization of citrate to isocitrate via cis-aconitate in the tricarboxylic acid (TCA) cycle. Aconitase activity is important for the initiation of morphological and physiological differentiation of S.viridochromogenes. In addition, the apo form of AcnA (lacking the [4Fe-4S] cluster) functions as a RNA-binding regulatory protein, which binds to iron responsive elements (IREs) located on the untranslated region of certain mRNAs, including recA and ftsZ. Binding to IRE-like structures probably alters the target mRNA stability and regulates the protein amount. The apo form plays a regulatory role in oxidative stress response. This chain is Aconitate hydratase A, found in Streptomyces viridochromogenes (strain DSM 40736 / JCM 4977 / BCRC 1201 / Tue 494).